The chain runs to 257 residues: Thiazole synthase (257 aa).

Residue lysine 96 is the Schiff-base intermediate with DXP of the active site. 1-deoxy-D-xylulose 5-phosphate-binding positions include glycine 157, 184 to 185, and 206 to 207; these read AG and NT.

It belongs to the ThiG family. As to quaternary structure, homotetramer. Forms heterodimers with either ThiH or ThiS.

The protein localises to the cytoplasm. It carries out the reaction [ThiS sulfur-carrier protein]-C-terminal-Gly-aminoethanethioate + 2-iminoacetate + 1-deoxy-D-xylulose 5-phosphate = [ThiS sulfur-carrier protein]-C-terminal Gly-Gly + 2-[(2R,5Z)-2-carboxy-4-methylthiazol-5(2H)-ylidene]ethyl phosphate + 2 H2O + H(+). The protein operates within cofactor biosynthesis; thiamine diphosphate biosynthesis. Catalyzes the rearrangement of 1-deoxy-D-xylulose 5-phosphate (DXP) to produce the thiazole phosphate moiety of thiamine. Sulfur is provided by the thiocarboxylate moiety of the carrier protein ThiS. In vitro, sulfur can be provided by H(2)S. This is Thiazole synthase from Bartonella quintana (strain Toulouse) (Rochalimaea quintana).